Here is a 69-residue protein sequence, read N- to C-terminus: MFTLKKTLLLLFFLGTISISLCKQERDADEDDGRKMTEEEVKRSIITTTKEAKLPQLWKQIACRLYNTC.

Positions methionine 1–cysteine 22 are cleaved as a signal peptide. A propeptide spanning residues lysine 23–arginine 43 is cleaved from the precursor. A disulfide bridge connects residues cysteine 63 and cysteine 69.

Belongs to the frog skin active peptide (FSAP) family. Pleurain subfamily. Expressed by the skin glands.

It localises to the secreted. Functionally, antimicrobial peptide. Has activity against Gram-positive and -negative bacteria, and fungi. Has little hemolytic activity on red blood cells. This chain is Pleurain-A4, found in Nidirana pleuraden (Yunnan pond frog).